The following is a 31-amino-acid chain: Cytochrome b6-f complex subunit 6 (31 aa).

A helical membrane pass occupies residues 3–23 (ILINYFLLVGFCFALASGLFL).

Belongs to the PetL family. The 4 large subunits of the cytochrome b6-f complex are cytochrome b6, subunit IV (17 kDa polypeptide, PetD), cytochrome f and the Rieske protein, while the 4 small subunits are PetG, PetL, PetM and PetN. The complex functions as a dimer.

The protein localises to the plastid. Its subcellular location is the chloroplast thylakoid membrane. Component of the cytochrome b6-f complex, which mediates electron transfer between photosystem II (PSII) and photosystem I (PSI), cyclic electron flow around PSI, and state transitions. PetL is important for photoautotrophic growth as well as for electron transfer efficiency and stability of the cytochrome b6-f complex. The sequence is that of Cytochrome b6-f complex subunit 6 from Thalassiosira pseudonana (Marine diatom).